Consider the following 982-residue polypeptide: Little elongation complex subunit 2 (982 aa).

A phosphoserine mark is found at serine 17 and serine 326. The span at 410–427 (TTKVSKSPSPASTSTVPN) shows a compositional bias: polar residues. Disordered regions lie at residues 410–450 (TTKV…PDIS) and 473–504 (GMDG…PLIQ). Over residues 479 to 497 (EECKNKDDQGFESCEKVSN) the composition is skewed to basic and acidic residues. A Phosphoserine modification is found at serine 571. Threonine 573 carries the post-translational modification Phosphothreonine. Disordered stretches follow at residues 595–623 (VGSN…NTAC), 672–697 (ENSK…KSGW), and 930–982 (PKSL…RKIT). Positions 597-610 (SNLSSRPASPNSSS) are enriched in low complexity. 2 stretches are compositionally biased toward polar residues: residues 611–623 (GQAS…NTAC) and 672–683 (ENSKQPSVSEQL). The segment covering 684-697 (SGPSDSSSWPKSGW) has biased composition (low complexity). A compositionally biased stretch (polar residues) spans 956–970 (SMETKSSCLPAQQVE).

Belongs to the ICE2 family. As to quaternary structure, component of the little elongation complex (LEC), at least composed of ELL (ELL, ELL2 or ELL3), ZC3H8, ICE1 and ICE2. Interacts with ICE1 (via C-terminus domain). Interacts with ELL. In terms of tissue distribution, expressed at low levels in lung and testis.

It is found in the nucleus. Its function is as follows. Component of the little elongation complex (LEC), a complex required to regulate small nuclear RNA (snRNA) gene transcription by RNA polymerase II and III. The polypeptide is Little elongation complex subunit 2 (ICE2) (Homo sapiens (Human)).